Reading from the N-terminus, the 865-residue chain is Catenin alpha-2 (865 aa).

Residues 823-839 (PEKKPLVKREKPEECQT) show a composition bias toward basic and acidic residues. The segment at 823 to 851 (PEKKPLVKREKPEECQTRVRRGSQKKHIS) is disordered. A compositionally biased stretch (basic residues) spans 840-850 (RVRRGSQKKHI).

This sequence belongs to the vinculin/alpha-catenin family.

Its subcellular location is the cell membrane. It localises to the cytoplasm. It is found in the cytoskeleton. The protein localises to the cell junction. The protein resides in the adherens junction. Its subcellular location is the cell projection. It localises to the axon. It is found in the nucleus. Functionally, may function as a linker between cadherin adhesion receptors and the cytoskeleton to regulate cell-cell adhesion and differentiation in the nervous system. This is Catenin alpha-2 (Ctnna2) from Danio rerio (Zebrafish).